A 315-amino-acid polypeptide reads, in one-letter code: tRNA dimethylallyltransferase (315 aa).

13–20 (GPTAVGKT) serves as a coordination point for ATP. A substrate-binding site is contributed by 15–20 (TAVGKT). The segment at 38–41 (DSMQ) is interaction with substrate tRNA.

Belongs to the IPP transferase family. Monomer. Requires Mg(2+) as cofactor.

The enzyme catalyses adenosine(37) in tRNA + dimethylallyl diphosphate = N(6)-dimethylallyladenosine(37) in tRNA + diphosphate. In terms of biological role, catalyzes the transfer of a dimethylallyl group onto the adenine at position 37 in tRNAs that read codons beginning with uridine, leading to the formation of N6-(dimethylallyl)adenosine (i(6)A). This chain is tRNA dimethylallyltransferase, found in Staphylococcus saprophyticus subsp. saprophyticus (strain ATCC 15305 / DSM 20229 / NCIMB 8711 / NCTC 7292 / S-41).